The sequence spans 294 residues: Bifunctional protein FolD (294 aa).

NADP(+) contacts are provided by residues 166-168, serine 191, and isoleucine 232; that span reads GRS.

Belongs to the tetrahydrofolate dehydrogenase/cyclohydrolase family. As to quaternary structure, homodimer.

The enzyme catalyses (6R)-5,10-methylene-5,6,7,8-tetrahydrofolate + NADP(+) = (6R)-5,10-methenyltetrahydrofolate + NADPH. The catalysed reaction is (6R)-5,10-methenyltetrahydrofolate + H2O = (6R)-10-formyltetrahydrofolate + H(+). It participates in one-carbon metabolism; tetrahydrofolate interconversion. Functionally, catalyzes the oxidation of 5,10-methylenetetrahydrofolate to 5,10-methenyltetrahydrofolate and then the hydrolysis of 5,10-methenyltetrahydrofolate to 10-formyltetrahydrofolate. This is Bifunctional protein FolD from Bradyrhizobium diazoefficiens (strain JCM 10833 / BCRC 13528 / IAM 13628 / NBRC 14792 / USDA 110).